A 203-amino-acid polypeptide reads, in one-letter code: MSKRQSAKYKLDRRMGENIWGRPKSPVNRREYGPGQHGQRRKGKMSDFGIQLRAKQKLKGYYGDITEKQFKKNYIEASRMKGDTGQNLIGLLERRLDAVVYRAKFTPTIFSARQLVSHGHVYVNGVKCNIASRLVKPGDEITLGKKAQEMALVAEAQSLPERDLPEYLAVDGTKATYVRVPTLDEVPYPVKMEPNLVVEFYSR.

The segment at 1–46 is disordered; sequence MSKRQSAKYKLDRRMGENIWGRPKSPVNRREYGPGQHGQRRKGKMS. The region spanning 94–157 is the S4 RNA-binding domain; the sequence is RRLDAVVYRA…QEMALVAEAQ (64 aa).

It belongs to the universal ribosomal protein uS4 family. As to quaternary structure, part of the 30S ribosomal subunit. Contacts protein S5. The interaction surface between S4 and S5 is involved in control of translational fidelity.

In terms of biological role, one of the primary rRNA binding proteins, it binds directly to 16S rRNA where it nucleates assembly of the body of the 30S subunit. With S5 and S12 plays an important role in translational accuracy. The polypeptide is Small ribosomal subunit protein uS4 (Sphingopyxis alaskensis (strain DSM 13593 / LMG 18877 / RB2256) (Sphingomonas alaskensis)).